Consider the following 61-residue polypeptide: Small ribosomal subunit protein uS14 (61 aa).

4 residues coordinate Zn(2+): cysteine 24, cysteine 27, cysteine 40, and cysteine 43.

This sequence belongs to the universal ribosomal protein uS14 family. Zinc-binding uS14 subfamily. In terms of assembly, part of the 30S ribosomal subunit. Contacts proteins S3 and S10. The cofactor is Zn(2+).

In terms of biological role, binds 16S rRNA, required for the assembly of 30S particles and may also be responsible for determining the conformation of the 16S rRNA at the A site. This chain is Small ribosomal subunit protein uS14, found in Pelobacter propionicus (strain DSM 2379 / NBRC 103807 / OttBd1).